The primary structure comprises 278 residues: Small ribosomal subunit protein uS5 (278 aa).

The tract at residues 1–43 (MADAPAPAGGRGGFRGGFGGRGRGRGRGRGRGRGRGRGAKDGD) is disordered. The span at 9–21 (GGRGGFRGGFGGR) shows a compositional bias: gly residues. Positions 22 to 37 (GRGRGRGRGRGRGRGR) are enriched in basic residues. Residues 88–151 (LKDEVLKIMP…ILAKLSVVPV (64 aa)) form the S5 DRBM domain.

This sequence belongs to the universal ribosomal protein uS5 family.

Its function is as follows. Component of the ribosome, a large ribonucleoprotein complex responsible for the synthesis of proteins in the cell. The small ribosomal subunit (SSU) binds messenger RNAs (mRNAs) and translates the encoded message by selecting cognate aminoacyl-transfer RNA (tRNA) molecules. The large subunit (LSU) contains the ribosomal catalytic site termed the peptidyl transferase center (PTC), which catalyzes the formation of peptide bonds, thereby polymerizing the amino acids delivered by tRNAs into a polypeptide chain. The nascent polypeptides leave the ribosome through a tunnel in the LSU and interact with protein factors that function in enzymatic processing, targeting, and the membrane insertion of nascent chains at the exit of the ribosomal tunnel. Plays a role in the assembly and function of the 40S ribosomal subunit. Mutations in this protein affects the control of translational fidelity. Involved in nucleolar processing of pre-18S ribosomal RNA and ribosome assembly. This is Small ribosomal subunit protein uS5 (RPS2) from Urechis caupo (Innkeeper worm).